The following is an 88-amino-acid chain: Large ribosomal subunit protein bL27 (88 aa).

Residues 1–20 (MASKKGVGSTKDGRDSIAKR) form a disordered region.

This sequence belongs to the bacterial ribosomal protein bL27 family.

The protein is Large ribosomal subunit protein bL27 (rpmA) of Geobacillus stearothermophilus (Bacillus stearothermophilus).